The primary structure comprises 496 residues: Iroquois-class homeodomain protein irx-4-A (496 aa).

The homeobox; TALE-type DNA-binding region spans 141 to 203 (GSSRRKNATR…NARRRLKKEN (63 aa)). The disordered stretch occupies residues 203–246 (NKMTWPPRNKCSDEKRPYDEEEEEEEEEEDSQKATIKNEKKTVD). Over residues 221 to 232 (DEEEEEEEEEED) the composition is skewed to acidic residues.

The protein belongs to the TALE/IRO homeobox family. In terms of tissue distribution, expressed in the neural plate in overlapping patterns with other irx members, which all share an anterior border of expression. At stage 20, expressed in a subset of cells in the developing hindbrain with expression appearing above the otic vesicle by stage 26. Expression in retina cells begins at stage 28, continuing at later stages and is limited to a subset of retinal cells of the optic cup. Also expressed in the ventricle of the heart from stage 36 (late tailbud) onwards. Only expressed in the pronephros at tadpole stage.

Its subcellular location is the nucleus. Functionally, acts partially redundantly with other irx members in neural patterning. Required for formation of the posterior forebrain, midbrain, hindbrain, and to a lesser extent, spinal cord. Patterns the neuroectoderm in both the anterior/posterior and dorsal/ventral axes. Does not appear to play a role in pronephros kidney development. This is Iroquois-class homeodomain protein irx-4-A (irx4-a) from Xenopus laevis (African clawed frog).